Consider the following 307-residue polypeptide: MTSNGLPVPAQNSNYMENGRWYHGFRRGLYMYPCDEPEKDRMDIYHQFFAVARRGQLHQAPVPSEPHLQPRILDVGCGTGIWAIDMADKYLNAEVLGLDLVNIQPEKIPPNLRFRVPRDYESPWTLGEDSWDLIHLRMACGSVESWPELYQKIYTHLKPGTGWIEHIEIDMEPRCDDYTLPPDSMLRKWYGWLADATQRAYRPIAYEHRTRQLLQAAGFIDIQETVIRVPYNTWPNDPHQKDIGRWYNLGLTEGLEALTFAPLTRVYHWDLNAHVRPIVEGVRRELCNRKIHAYNNIHIWTARRPQQ.

Belongs to the methyltransferase superfamily. LaeA methyltransferase family. Component of the heterotrimeric velvet complex composed of LAE1, VEL1 and VEL2; VEL1 acting as a bridging protein between LAE1 and VEL2.

The protein resides in the nucleus. The enzyme catalyses L-methionyl-[protein] + S-adenosyl-L-methionine = S-methyl-L-methionyl-[protein] + S-adenosyl-L-homocysteine. In terms of biological role, methyltransferase that performs automethylation. No other methyl-accepting substrate has been identified yet. Component of the velvet transcription factor complex that acts as a global regulator for secondary metabolite gene expression. Controls the expression of the T-toxin gene cluster. Promotes oxidative stress tolerance and acts as a virulence factors during infection. Negatively regulate mycelial pigmentation and controls sexual development, as well as asexual development during vegetative growth. The sequence is that of Secondary metabolism regulator LAE1 from Cochliobolus heterostrophus (strain C5 / ATCC 48332 / race O) (Southern corn leaf blight fungus).